The primary structure comprises 341 residues: UDP-3-O-acylglucosamine N-acyltransferase (341 aa).

Histidine 236 acts as the Proton acceptor in catalysis.

Belongs to the transferase hexapeptide repeat family. LpxD subfamily. In terms of assembly, homotrimer.

The enzyme catalyses a UDP-3-O-[(3R)-3-hydroxyacyl]-alpha-D-glucosamine + a (3R)-hydroxyacyl-[ACP] = a UDP-2-N,3-O-bis[(3R)-3-hydroxyacyl]-alpha-D-glucosamine + holo-[ACP] + H(+). Its pathway is bacterial outer membrane biogenesis; LPS lipid A biosynthesis. Catalyzes the N-acylation of UDP-3-O-acylglucosamine using 3-hydroxyacyl-ACP as the acyl donor. Is involved in the biosynthesis of lipid A, a phosphorylated glycolipid that anchors the lipopolysaccharide to the outer membrane of the cell. This is UDP-3-O-acylglucosamine N-acyltransferase from Lawsonia intracellularis (strain PHE/MN1-00).